A 64-amino-acid polypeptide reads, in one-letter code: Large ribosomal subunit protein bL32 (64 aa).

This sequence belongs to the bacterial ribosomal protein bL32 family.

The protein is Large ribosomal subunit protein bL32 of Flavobacterium johnsoniae (strain ATCC 17061 / DSM 2064 / JCM 8514 / BCRC 14874 / CCUG 350202 / NBRC 14942 / NCIMB 11054 / UW101) (Cytophaga johnsonae).